Consider the following 744-residue polypeptide: Phosphoribosylformylglycinamidine synthase subunit PurL (744 aa).

Residue histidine 49 is part of the active site. Positions 52 and 91 each coordinate ATP. Glutamate 93 is a Mg(2+) binding site. Substrate contacts are provided by residues 94 to 97 and arginine 116; that span reads SHNH. Histidine 95 acts as the Proton acceptor in catalysis. Residue aspartate 117 coordinates Mg(2+). Glutamine 240 is a substrate binding site. Aspartate 268 contributes to the Mg(2+) binding site. Position 312–314 (312–314) interacts with substrate; it reads ESQ. 2 residues coordinate ATP: aspartate 493 and glycine 530. Asparagine 531 is a binding site for Mg(2+). Serine 533 contacts substrate.

This sequence belongs to the FGAMS family. In terms of assembly, monomer. Part of the FGAM synthase complex composed of 1 PurL, 1 PurQ and 2 PurS subunits.

It is found in the cytoplasm. The catalysed reaction is N(2)-formyl-N(1)-(5-phospho-beta-D-ribosyl)glycinamide + L-glutamine + ATP + H2O = 2-formamido-N(1)-(5-O-phospho-beta-D-ribosyl)acetamidine + L-glutamate + ADP + phosphate + H(+). It participates in purine metabolism; IMP biosynthesis via de novo pathway; 5-amino-1-(5-phospho-D-ribosyl)imidazole from N(2)-formyl-N(1)-(5-phospho-D-ribosyl)glycinamide: step 1/2. Part of the phosphoribosylformylglycinamidine synthase complex involved in the purines biosynthetic pathway. Catalyzes the ATP-dependent conversion of formylglycinamide ribonucleotide (FGAR) and glutamine to yield formylglycinamidine ribonucleotide (FGAM) and glutamate. The FGAM synthase complex is composed of three subunits. PurQ produces an ammonia molecule by converting glutamine to glutamate. PurL transfers the ammonia molecule to FGAR to form FGAM in an ATP-dependent manner. PurS interacts with PurQ and PurL and is thought to assist in the transfer of the ammonia molecule from PurQ to PurL. This Nitrobacter hamburgensis (strain DSM 10229 / NCIMB 13809 / X14) protein is Phosphoribosylformylglycinamidine synthase subunit PurL.